The sequence spans 135 residues: Lymphocyte antigen 6 complex locus protein G6d (135 aa).

The first 19 residues, 1-19 (MNSQLVGILLSALLGVALG), serve as a signal peptide directing secretion. Residues 22 to 121 (TRCYDCGGGP…ASSVTPLCIL (100 aa)) form the UPAR/Ly6 domain. 5 disulfides stabilise this stretch: C24/C48, C27/C35, C42/C76, C82/C101, and C102/C107. Residue T68 is glycosylated (O-linked (GalNAc...) threonine). Residue N108 is the site of GPI-anchor amidated asparagine attachment. A propeptide spans 109–135 (SAVASSVTPLCILAAAVTTLAWLLPGL) (removed in mature form).

In terms of assembly, homodimer. Post-translationally, O-glycosylated. As to expression, expressed in embryonic tissue and adult lung, kidney, brain, liver and spleen.

It is found in the cell membrane. Its subcellular location is the cell projection. The protein localises to the filopodium. This chain is Lymphocyte antigen 6 complex locus protein G6d (Ly6g6d), found in Mus musculus (Mouse).